Consider the following 189-residue polypeptide: T-cell surface glycoprotein CD3 epsilon chain (189 aa).

The N-terminal stretch at 1 to 21 (MRWNTFWGILCLSLLAVGTCQ) is a signal peptide. One can recognise an Ig-like domain in the interval 23–99 (DAENIEYKVS…KNTYLYLKAR (77 aa)). Residues 23-108 (DAENIEYKVS…RVCEYCVEVD (86 aa)) lie on the Extracellular side of the membrane. Cysteines 42 and 83 form a disulfide. Residues 109–134 (LTAVAIIIIVDICITLGLLMVIYYWS) form a helical membrane-spanning segment. Residues 135–189 (KNRKAKAKPVTRGTGAGSRPRGQNKERPPPVPNPDYEPIRKGQRDLYSGLNQRAV) are Cytoplasmic-facing. The segment at 143–189 (PVTRGTGAGSRPRGQNKERPPPVPNPDYEPIRKGQRDLYSGLNQRAV) is disordered. An NUMB-binding region region spans residues 157–174 (QNKERPPPVPNPDYEPIR). The ITAM domain maps to 160–187 (ERPPPVPNPDYEPIRKGQRDLYSGLNQR). Positions 161-168 (RPPPVPNP) are proline-rich sequence. Phosphotyrosine is present on residues Tyr170 and Tyr181.

In terms of assembly, the TCR-CD3 complex is composed of a CD3D/CD3E and a CD3G/CD3E heterodimers that preferentially associate with TCRalpha and TCRbeta, respectively, to form TCRalpha/CD3E/CD3G and TCRbeta/CD3G/CD3E trimers. In turn, the hexamer interacts with CD3Z homodimer to form the TCR-CD3 complex. Alternatively, TCRalpha and TCRbeta can be replaced by TCRgamma and TCRdelta. Interacts with CD6. Interacts (via Proline-rich sequence) with NCK1; the interaction is ligand dependent but independent of tyrosine kinase activation. In terms of processing, phosphorylated on Tyr residues after T-cell receptor triggering by LCK in association with CD4/CD8.

It is found in the cell membrane. Part of the TCR-CD3 complex present on T-lymphocyte cell surface that plays an essential role in adaptive immune response. When antigen presenting cells (APCs) activate T-cell receptor (TCR), TCR-mediated signals are transmitted across the cell membrane by the CD3 chains CD3D, CD3E, CD3G and CD3Z. All CD3 chains contain immunoreceptor tyrosine-based activation motifs (ITAMs) in their cytoplasmic domain. Upon TCR engagement, these motifs become phosphorylated by Src family protein tyrosine kinases LCK and FYN, resulting in the activation of downstream signaling pathways. In addition of this role of signal transduction in T-cell activation, CD3E plays an essential role in correct T-cell development. Also participates in internalization and cell surface down-regulation of TCR-CD3 complexes via endocytosis sequences present in CD3E cytosolic region. In addition to its role as a TCR coreceptor, it serves as a receptor for ITPRIPL1. Ligand recognition inhibits T-cell activation by promoting interaction with NCK1, which prevents CD3E-ZAP70 interaction and blocks the ERK-NFkB signaling cascade and calcium influx. This is T-cell surface glycoprotein CD3 epsilon chain (Cd3e) from Mus musculus (Mouse).